The following is a 382-amino-acid chain: S-adenosylmethionine synthase (382 aa).

Residue His-16 participates in ATP binding. Asp-18 is a binding site for Mg(2+). K(+) is bound at residue Glu-44. L-methionine-binding residues include Glu-57 and Gln-100. A flexible loop region spans residues 100–110 (QSADIAMGVDE). ATP-binding positions include 165-167 (DAK), Asp-240, 246-247 (RK), Ala-263, and Lys-267. Asp-240 provides a ligand contact to L-methionine. Position 271 (Lys-271) interacts with L-methionine.

Belongs to the AdoMet synthase family. As to quaternary structure, homotetramer; dimer of dimers. Mg(2+) serves as cofactor. It depends on K(+) as a cofactor.

The protein resides in the cytoplasm. It carries out the reaction L-methionine + ATP + H2O = S-adenosyl-L-methionine + phosphate + diphosphate. Its pathway is amino-acid biosynthesis; S-adenosyl-L-methionine biosynthesis; S-adenosyl-L-methionine from L-methionine: step 1/1. Its function is as follows. Catalyzes the formation of S-adenosylmethionine (AdoMet) from methionine and ATP. The overall synthetic reaction is composed of two sequential steps, AdoMet formation and the subsequent tripolyphosphate hydrolysis which occurs prior to release of AdoMet from the enzyme. The sequence is that of S-adenosylmethionine synthase from Saccharophagus degradans (strain 2-40 / ATCC 43961 / DSM 17024).